Here is a 18562-residue protein sequence, read N- to C-terminus: Titin homolog (18562 aa).

The region spanning 90–176 (PKFIQVIKAY…GVSTSYGYIT (87 aa)) is the Ig-like 1 domain. A disordered region spans residues 384-404 (RFHPQPPKPPRAGTSRRFLPE). 4 consecutive Ig-like domains span residues 406 to 493 (PKFV…TQVT), 821 to 913 (PKIV…AFIN), 943 to 1038 (PKFI…LTIS), and 1135 to 1225 (PRFE…LTVD). Cys-842 and Cys-897 are joined by a disulfide. Residues 1336–1360 (LPPVQKSMSVQEEKASSQRTPSPMN) are disordered. Positions 1679-1762 (PKFLRKLVNC…ASNVAGTTFS (84 aa)) constitute an Ig-like 6 domain. An intrachain disulfide couples Cys-1700 to Cys-1751. Coiled-coil stretches lie at residues 1766-1786 (LKLS…SEIK), 2011-2038 (QSLD…ERTS), and 2065-2085 (ISDQ…ALQE). Residues 2155-2177 (RKGSDKDKRKATRIKRVPSAHSA) form a disordered region. Residues 2163 to 2172 (RKATRIKRVP) are compositionally biased toward basic residues. A coiled-coil region spans residues 2205 to 2231 (LKQNEEAKEIQELFVKIEKEINTIAEL). 2 disordered regions span residues 2298–2459 (IIGI…TADA) and 2614–2637 (KSSL…EVTA). Low complexity predominate over residues 2309–2323 (RRPSSTPRGSTRSSN). A compositionally biased stretch (polar residues) spans 2324 to 2341 (LTTSQDSQATTKMTVSSE). Residues 2606–2630 (LMQTLASEKSSLKAAEEDEKEGEEE) adopt a coiled-coil conformation. The span at 2621 to 2636 (EEDEKEGEEEGEEEVT) shows a compositional bias: acidic residues. Ig-like domains lie at 3095-3177 (KEVM…SGLY) and 3179-3264 (TERS…SFVS). Residues 3362–3692 (EVPKVAEPSE…NAEAQKVVDS (331 aa)) form a disordered region. Residues 3655 to 3665 (SEEETPLEETN) show a composition bias toward acidic residues. 3 consecutive Ig-like domains span residues 3789-3878 (PVFT…CEIV), 3897-3985 (PHFV…CTID), and 4038-4125 (PPYF…CVLT). 2 disulfide bridges follow: Cys-3919/Cys-3969 and Cys-4059/Cys-4109. Disordered regions lie at residues 4553-4599 (QSRE…SAPT), 4634-4699 (TVEP…EIVE), 4750-4814 (GSTA…TSEV), 4826-4855 (PVPE…EVQP), 4912-4931 (STAA…VESK), 4950-4969 (PETS…PVES), 4989-5216 (PETS…EILE), 5267-5294 (GSTA…EVEP), 5306-5325 (PETS…SVES), 5345-5372 (PETS…EVEP), 5428-6101 (GSTA…VEPT), 6127-6157 (VQVP…EVQP), 6214-6900 (STAA…ETSE), and 6930-8453 (APVE…DDKL). Residues 4555 to 4577 (RELDNTERNFTVNKEKDESKKPS) are compositionally biased toward basic and acidic residues. PVET repeat units lie at residues 4599-4626 (TVEK…KDVP), 4627-4665 (VPET…KDVP), 4666-4704 (VPET…KDVT), 4755-4787 (PAQE…KDVP), 4788-4826 (VPET…KDVP), 4827-4865 (VPET…KDVT), 4917-4948 (AQEP…KDVP), 4949-4987 (VPET…KDVP), 4988-5026 (VPET…KDVP), 5027-5065 (VPET…KDVP), 5066-5104 (VPET…KDVP), 5105-5143 (VPET…KDVP), 5144-5182 (VPET…KVVP), 5183-5221 (VPET…KDVT), 5273-5304 (AQEP…KDVP), 5305-5343 (VPET…KDVP), 5344-5382 (VPET…KDVT), 5434-5465 (AQEP…KDVP), 5466-5504 (VPET…KDVP), 5505-5543 (VPET…KVVP), 5544-5582 (VPET…KDVP), 5583-5621 (VPET…KDVP), 5622-5660 (VPET…KDVS), 5661-5699 (VPET…KDVS), 5700-5738 (VPET…KDVP), 5739-5777 (VPET…KDVQ), 5778-5816 (VPET…KDVP), 5817-5855 (VPET…KDVP), 5856-5894 (VPET…KDVS), 5895-5933 (VPET…KDVP), 5934-5972 (VPET…KDVQ), 5973-6011 (VPET…KDVP), 6012-6050 (VPET…KDVQ), 6051-6089 (VPET…KDVS), 6090-6128 (VPET…KDVQ), 6129-6167 (VPET…KDVT), 6219-6250 (AHEP…KDVP), 6251-6289 (VPET…KDLP), 6290-6328 (VPET…KDVP), 6329-6367 (VPET…KDVP), 6368-6406 (VPET…KDVP), 6407-6445 (VPET…KDVS), 6446-6484 (VPET…KDVS), 6485-6523 (VPET…KDVP), 6524-6562 (VPET…KDVQ), 6563-6601 (VPET…KDVP), 6602-6640 (VPET…KDVP), 6641-6679 (VPET…KDVQ), 6680-6718 (VPET…KDVP), 6719-6757 (VPET…KDVA), 6758-6796 (VPET…KDVP), 6797-6835 (VPET…KDVP), 6836-6874 (VPET…KDVP), 6875-6913 (VPET…KDVP), 6914-6952 (VPEA…KDVP), and 6953-6991 (VPEA…KLKK). Basic and acidic residues-rich tracts occupy residues 4638-4651 (TVEK…KETS) and 4677-4691 (TVEK…EKSE). Residues 4960-4969 (TVEKLKPVES) are compositionally biased toward basic and acidic residues. The segment covering 5038 to 5051 (TVEKLKPVESKETS) has biased composition (basic and acidic residues). Basic and acidic residues-rich tracts occupy residues 5116 to 5129 (TVEK…KETS) and 5155 to 5168 (TVEK…KETS). A coiled-coil region spans residues 5212–5235 (AEILEQKDVTCEEEIKELLTEVEV). The span at 5316–5325 (TVEKLKSVES) shows a compositional bias: basic and acidic residues. 2 stretches are compositionally biased toward basic and acidic residues: residues 5477-5490 (TVEK…KETS) and 5516-5529 (TVEK…KETS). Composition is skewed to basic and acidic residues over residues 6690-6704 (PTKE…KETS), 6729-6743 (PTKE…KETS), 6768-6782 (PTKE…KETS), 6807-6821 (PTKE…KETS), 6846-6860 (PTKE…KETS), and 6885-6899 (PTKE…KETS). Basic and acidic residues-rich tracts occupy residues 6972 to 7606 (ESKE…DNFK), 7613 to 7630 (LQKE…DNFK), 7637 to 8062 (LQKE…DNFK), and 8069 to 8453 (LQKE…DDKL). The stretch at 6984–7812 (QADAKLKKEK…DKLKQETDAK (829 aa)) forms a coiled coil. BLUE repeat units follow at residues 6992–6996 (EKDDK), 6997–7012 (HKQE…NDDK), 7013–7028 (LKQE…NDDK), 7029–7044 (LKQE…NDDK), 7045–7060 (LKQE…NDDK), 7061–7076 (LKQE…NDDK), 7077–7092 (LKQE…NDDK), 7093–7108 (LKQE…NDDK), 7109–7124 (LKQE…NDDK), 7125–7140 (LKQE…NDDK), 7141–7156 (LKQE…NDDK), 7157–7172 (LKQE…NDDK), 7173–7188 (LKQE…NDDK), 7189–7204 (LKQE…KHDK), 7205–7220 (LKQE…NDDK), 7221–7236 (LKQE…NDDK), 7237–7252 (LKQE…KDDK), 7253–7268 (LKQE…KDDK), 7269–7284 (LKQD…KDDK), 7285–7300 (LKQE…KDDK), 7301–7316 (LKHE…KDDK), 7317–7332 (LKQE…KDDR), 7333–7348 (LKKD…KDDK), 7349–7364 (LKQE…KDDK), 7365–7380 (LKHE…KDDK), 7381–7396 (LKQE…KDDK), 7397–7412 (LKQE…KDDK), 7413–7428 (LKQE…KDDK), 7429–7444 (LKQE…KDDK), 7445–7460 (LKQE…KDDK), 7461–7476 (LKQE…KDDK), 7477–7492 (LKQE…KDDK), 7493–7508 (LKQE…KDDK), 7509–7524 (LKQD…KDDK), 7525–7540 (LKQE…KDDK), 7541–7556 (LKHE…KDDK), 7557–7572 (LKQE…KDDK), 7573–7588 (LKQD…KDDK), 7589–7604 (LKHE…KDDN), 7605–7620 (FKQE…KDDK), 7621–7628 (LKQEKDDN), 7629–7644 (FKQE…KDDK), 7645–7652 (LKQEKDDK), 7653–7668 (LKQE…KDDK), 7669–7684 (LKQE…KDDK), 7685–7700 (LKQE…KDDK), 7701–7716 (LKQE…KDDK), 7717–7732 (LKQE…KDDK), 7733–7748 (LKQE…KDDK), 7749–7764 (LKQE…KDDK), 7765–7772 (LKQEKNDK), 7773–7788 (LKQE…KDDK), 7789–7804 (LKQE…KDDK), 7805–7820 (LKQE…KDDK), 7821–7836 (LKQE…KDDK), 7837–7852 (LKQE…KDDK), 7853–7868 (LKQE…KDNK), 7869–7884 (LKQE…KDNK), 7885–7900 (LKQE…KDDK), 7901–7916 (LKQE…KDDK), 7917–7932 (LKQE…KDDK), 7933–7948 (LKQE…KDDK), 7949–7964 (LKQE…KDDK), 7965–7980 (LKQE…KDDK), 7981–7996 (LKQE…KDDK), 7997–8012 (LKQE…KDDK), 8013–8028 (LKQE…KDDK), 8029–8044 (LKQE…KDDK), 8045–8060 (LKQE…KDDN), 8061–8076 (FKQE…KDDK), 8077–8084 (LKQEKDDK), 8085–8100 (LKQE…KDDK), 8101–8116 (LKQE…KDDK), 8117–8132 (LKQE…KDDK), 8133–8148 (LKQE…KDDK), 8149–8164 (LKQE…KDDK), 8165–8180 (LKQE…KDDK), 8181–8196 (LKQE…KDDK), 8197–8212 (LKQE…KDDK), 8213–8228 (LKQE…KDDK), 8229–8244 (LKQE…KDDK), 8245–8260 (LKQE…KDDK), 8261–8276 (LKQE…KDDK), 8277–8292 (LKQE…KDDK), 8293–8308 (LKQE…KDNK), 8309–8324 (LKQE…KDNK), 8325–8340 (LKQE…KDDK), 8341–8356 (LKQE…KDDK), 8357–8371 (LKQE…EKDD), 8373–8388 (LKQE…KDDK), 8389–8404 (LKQE…KDDK), 8405–8420 (LKQE…KDDK), 8421–8436 (LKQE…KDDK), 8437–8452 (LKQE…KDDK), 8453–8468 (LKQE…KDDK), and 8469–8484 (LKQE…KGDK). Residues 7876-8273 (KLKKEKDNKL…EADAKLKKDK (398 aa)) adopt a coiled-coil conformation. The stretch at 8316-8490 (KLKKEKDNKL…KGDKLKLEDQ (175 aa)) forms a coiled coil. Residues 8599–8611 (KHLKKKKKHHKKE) are compositionally biased toward basic residues. Positions 8599 to 8626 (KHLKKKKKHHKKEKIAVKETEQDEKTVS) are disordered. Positions 8612–8626 (KIAVKETEQDEKTVS) are enriched in basic and acidic residues. The 92-residue stretch at 8950 to 9041 (KPRKAQLVAL…EIIEVNTLDY (92 aa)) folds into the Fibronectin type-III 1 domain. Disordered stretches follow at residues 9079 to 9104 (IEEH…LDSE), 9147 to 9436 (VQKI…AAAE), 9481 to 9609 (EEQS…ETES), 9702 to 10224 (ADAV…ESRI), 10239 to 10274 (ESDD…EDSP), 10539 to 11018 (QSAP…DSFT), 11030 to 11111 (EDAV…QKDQ), 11123 to 11213 (KKLA…QDKT), 11225 to 11387 (AKTT…SLTS), 11420 to 11592 (KGLN…NPEL), 11624 to 11825 (LTKK…SDNL), 11872 to 11955 (LSAH…TSLS), 11996 to 12054 (TNLI…LQKN), 12397 to 12418 (GRRV…RKKR), 12537 to 12974 (EESR…PAES), 13026 to 13045 (EAAK…TEVV), 13065 to 13261 (AAEA…LNDK), 13283 to 13514 (QAQA…EQLK), 13553 to 13574 (EEKQ…KLKL), and 13594 to 13874 (EKLA…RRTG). Basic residues predominate over residues 9084-9093 (KLKKKSKKSK). 2 stretches are compositionally biased toward basic and acidic residues: residues 9172 to 9184 (VKKD…KKSL) and 9191 to 9202 (TKKEIQGKPEKK). Residues 9213–9231 (SSISETSETLTKDLTQTKQ) are compositionally biased toward polar residues. Positions 9232-9267 (SEPEPAKRTTETSVQDEVKRKTETTSKSKQTTEEHP) are enriched in basic and acidic residues. Low complexity predominate over residues 9273-9283 (SDSSISSTSDA). Residues 9295-9332 (EAQKVTEKPETAKLESKSKMTEDTTKESDNKETVDEKP) are compositionally biased toward basic and acidic residues. Residues 9346-9359 (STISETSETSAVES) show a composition bias toward low complexity. A coiled-coil region spans residues 9371–9510 (AAVDKEKKQK…QTKAKAAEKQ (140 aa)). Basic and acidic residues-rich tracts occupy residues 9373 to 9436 (VDKE…AAAE) and 9481 to 9521 (EEQS…KSNK). Over residues 9547 to 9558 (SSISQKSDTSKT) the composition is skewed to low complexity. The stretch at 9577–9749 (TSKQKETDKK…QTVEEQAKLD (173 aa)) forms a coiled coil. Basic and acidic residues-rich tracts occupy residues 9578-9609 (SKQK…ETES) and 9702-9783 (ADAV…DEKP). Polar residues predominate over residues 9798-9809 (SISQKSVTSKTV). Basic and acidic residues-rich tracts occupy residues 9819 to 10004 (ETQK…DEKP), 10040 to 10149 (ETQK…KSEN), and 10162 to 10196 (VKSE…EPKE). Coiled coils occupy residues 9822–9995 (KVAD…TEEA) and 10046–10129 (EADK…TSKK). Residues 10197-10206 (KKKIIKKKKD) show a composition bias toward basic residues. Basic and acidic residues predominate over residues 10207 to 10224 (TTKPQEASKELSSDESRI). A compositionally biased stretch (polar residues) spans 10239-10250 (ESDDLSTASTIK). In terms of domain architecture, Fibronectin type-III 2 spans 10461–10553 (KPTSLQVTST…DTIEATTQAE (93 aa)). The segment covering 10566-10609 (EKVKEPVSKKPENTKESEGHKKRDRKESEDHDENNLGKSGKDEF) has biased composition (basic and acidic residues). Residues 10612 to 10637 (SGESGTSNQNEESAQLNTSFTSTEQH) show a composition bias toward polar residues. Acidic residues predominate over residues 10663–10680 (IDADVVEVEYDEQGDDIP). Over residues 10707 to 10716 (MAEKDSDAME) the composition is skewed to basic and acidic residues. Over residues 10779 to 10790 (ADQTGMSIQDLN) the composition is skewed to polar residues. Composition is skewed to basic and acidic residues over residues 10840–10852 (QLDK…DDKM) and 10863–10884 (KKPE…KESD). Positions 10961–10975 (LSTSEQVENASQNLG) are enriched in polar residues. Basic and acidic residues-rich tracts occupy residues 10999 to 11009 (IHGEAESKLGE), 11045 to 11055 (SAEKTSLEVRD), and 11076 to 11089 (SNRD…RDLN). The stretch at 11018–11064 (TLQDLYEELKAKEDAVEAGAETSNADQSAEKTSLEVRDMKKKMKKKQ) forms a coiled coil. Residues 11090-11108 (TQHSNQTGEDESSTFNFGQ) show a composition bias toward polar residues. Residues 11159-11173 (KKGEENEKTKFEAKH) are compositionally biased toward basic and acidic residues. Positions 11174–11187 (LGSSSASDSLAEST) are enriched in low complexity. 3 stretches are compositionally biased toward basic and acidic residues: residues 11195 to 11211 (KGEV…KNQD), 11271 to 11280 (IPDKNRDSDK), and 11295 to 11318 (ESAE…EKTL). A compositionally biased stretch (polar residues) spans 11374-11387 (SKVTTSFADESLTS). Composition is skewed to basic and acidic residues over residues 11440–11464 (KVKD…KDQK) and 11472–11485 (GSKD…EEKT). Positions 11503–11515 (MTDQKNVQESQYA) are enriched in polar residues. Basic and acidic residues-rich tracts occupy residues 11624–11635 (LTKKQDENDAKK), 11645–11669 (AKKD…DSRE), and 11722–11735 (VSEK…EKTV). The segment covering 11754 to 11767 (ESLNASSALSTTDV) has biased composition (polar residues). The segment covering 11916–11937 (AEDKYVESRKKTTLKKKPEQKQ) has biased composition (basic and acidic residues). Positions 12408–12428 (ELDDAKKRKKRRIKRVVERRN) form a coiled coil. In terms of domain architecture, Ig-like 12 spans 12432 to 12547 (PRLTQLIPPR…ESRDDDKSVD (116 aa)). Basic and acidic residues-rich tracts occupy residues 12537–12547 (EESRDDDKSVD), 12555–12567 (LEEK…DKSK), and 12609–12689 (VGAK…KKDA). Positions 12690-12701 (SQPSSSKESSPP) are enriched in low complexity. Polar residues predominate over residues 12729–12740 (TMHSETNITTTI). Basic and acidic residues-rich tracts occupy residues 12766–12839 (ESAK…KNKS), 12852–12865 (ETKK…EVPK), and 12889–12940 (PADD…DDKS). Positions 12797 to 12828 (KKSEKKDEVTAEKQSTEALIESKKKEVDESKI) form a coiled coil. Residues 12980–13103 (AEVNKAKKQK…LKLEEESAAK (124 aa)) adopt a coiled-coil conformation. 7 stretches are compositionally biased toward basic and acidic residues: residues 13065–13124 (AAEA…KAGE), 13133–13145 (PTSK…KDVG), 13176–13191 (TDSE…DEPT), 13203–13261 (EADK…LNDK), 13283–13327 (QAQA…EKQA), 13337–13354 (AVKK…EANK), and 13361–13416 (LKIE…DEKP). Residues 13237–13380 (LDAQEKIKKV…SKQTVEEQAK (144 aa)) are a coiled coil. A compositionally biased stretch (polar residues) spans 13431-13442 (SISQKSETSKTV). Basic and acidic residues predominate over residues 13452–13514 (ETQKVADAAR…KQKEKDEQLK (63 aa)). A coiled-coil region spans residues 13455-13628 (KVADAARKQK…ETKSKQTEEA (174 aa)). Residues 13594-13637 (EKLAQEQSRLEDEAKKSAEKQKLESETKSKQTEEAPKESVDEKP) are compositionally biased toward basic and acidic residues. Over residues 13651-13662 (SSISQKSKSAKS) the composition is skewed to low complexity. Residues 13684–13696 (KVEQSPDESTSAT) show a composition bias toward polar residues. Basic and acidic residues predominate over residues 13697 to 13735 (IKRDPAQKTEEISKQDDGDEKKTTTDGKPPKPEDSEATP). Positions 13747–13760 (SDSVASDASLADVS) are enriched in low complexity. The segment covering 13761-13770 (KLSDDVEEKP) has biased composition (basic and acidic residues). A compositionally biased stretch (polar residues) spans 13784-13793 (SVISETSSVD). Composition is skewed to basic and acidic residues over residues 13795–13808 (IKPE…EKAE) and 13824–13843 (SEPK…DMMT). The Ig-like 13 domain maps to 13963-14036 (PVDFVKYLPR…RAKYEDSGKY (74 aa)). Fibronectin type-III domains are found at residues 14153 to 14247 (APGD…TGSP), 14253 to 14348 (VEFP…TVEG), and 14350 to 14448 (VPEI…VLAD). Ig-like domains lie at 14451-14542 (PRVL…VGIS), 14550-14634 (SSFS…VIVN), and 14638-14727 (PHIL…LVFE). The cysteines at positions 14568 and 14618 are disulfide-linked. 2 Fibronectin type-III domains span residues 14826 to 14920 (APCD…TLES) and 14937 to 15027 (ILRT…LVPG). The disordered stretch occupies residues 15011–15180 (VSSPSEETNP…TGKETTEKKK (170 aa)). Basic and acidic residues-rich tracts occupy residues 15034–15060 (KTEK…EKQV) and 15085–15117 (KVAE…ESRR). The segment covering 15118–15132 (GSLQASSDNESVTTT) has biased composition (polar residues). Positions 15133-15177 (SEKRSEAELEKNSEKSAEKKSTSADLEAADKAETEKSETGKETTE) are enriched in basic and acidic residues. Ig-like domains lie at 15180–15274 (KKVV…VSIA) and 15283–15371 (PKVE…IALR). 2 Fibronectin type-III domains span residues 15383 to 15475 (PTGP…LKKK) and 15503 to 15596 (QIGK…TTES). Residues 15470 to 15503 (TTLKKKEETGKQKSEKSESDEKKSESDKVSELKQ) are disordered. The segment covering 15473–15503 (KKKEETGKQKSEKSESDEKKSESDKVSELKQ) has biased composition (basic and acidic residues). 2 Ig-like domains span residues 15599 to 15687 (PAFT…CKLT) and 15692 to 15786 (PEIN…IQVT). In terms of domain architecture, Fibronectin type-III 10 spans 15791-15883 (APGKPAVEDQ…DESELVVVKN (93 aa)). A Protein kinase domain is found at 15934–16189 (YIIHEELGKG…VQDALRHPWI (256 aa)). Residues 15940–15948 (LGKGAYGTV) and Lys-15963 each bind ATP. Asp-16055 functions as the Proton acceptor in the catalytic mechanism. An autoinhibitory domain region spans residues 16206–16264 (KMQPKLDKSGVPARQKRNFLSLKRWSDDLLPIGRLAKRGAIFRRLTMDGVFERNIAFDT). 4 consecutive Ig-like domains span residues 16268 to 16358 (PSVK…AKLS), 16500 to 16575 (GKQL…VAKN), 16605 to 16692 (PRFR…FSVV), and 16705 to 16789 (PKFL…KDFT). Disulfide bonds link Cys-16290/Cys-16342, Cys-16508/Cys-16571, Cys-16627/Cys-16677, and Cys-16726/Cys-16778. The disordered stretch occupies residues 16805–16827 (LTPVRSRSRSRSRSPSVVGGEIQ). 3 Ig-like domains span residues 16829-16918 (PPVV…AIVV), 16932-17025 (PTFV…LTIS), and 17037-17126 (PYFI…TEVS). A disordered region spans residues 17121 to 17169 (QNTEVSVTKSKEVKEKKEKKKVEKKDEGKKKPGRPGLPRPSGASKTEQV). Positions 17129–17150 (KSKEVKEKKEKKKVEKKDEGKK) are enriched in basic and acidic residues. The 92-residue stretch at 17154–17245 (RPGLPRPSGA…MTSTLKTASV (92 aa)) folds into the Fibronectin type-III 11 domain. 11 Ig-like domains span residues 17249-17336 (PQFT…CQVT), 17358-17447 (PTLQ…CNVA), 17457-17548 (PSFS…VMIA), 17570-17661 (PRFT…TQVI), 17676-17765 (PKFT…QATT), 17782-17873 (PRFV…LNVS), 18008-18097 (PKFM…SEID), 18121-18213 (PNFI…LQVS), 18224-18316 (PPLF…MQLD), 18329-18417 (PRVF…LELT), and 18429-18519 (PKFN…MILS). Disulfide bonds link Cys-17379–Cys-17431 and Cys-17478–Cys-17530. Cys-17697 and Cys-17754 are disulfide-bonded. A disulfide bond links Cys-18143 and Cys-18195.

This sequence belongs to the protein kinase superfamily. CAMK Ser/Thr protein kinase family. In terms of assembly, interacts (via C-terminus) with myosin. Interacts with actin. It depends on Mg(2+) as a cofactor. Expression is restricted to body wall, enteric and vulval muscles.

The protein resides in the cytoplasm. Its subcellular location is the myofibril. It localises to the sarcomere. The protein localises to the a band. It is found in the i band. The protein resides in the nucleus membrane. It carries out the reaction L-seryl-[protein] + ATP = O-phospho-L-seryl-[protein] + ADP + H(+). The enzyme catalyses L-threonyl-[protein] + ATP = O-phospho-L-threonyl-[protein] + ADP + H(+). Serine/threonine-protein kinase. Key component in the assembly and functioning of muscles. By providing connections at the level of individual microfilaments, it contributes to the fine balance of forces between the two halves of the sarcomere. The size and extensibility of the cross-links are the main determinants of sarcomere extensibility properties of muscle. In non-muscle cells, seems to play a role in chromosome condensation and chromosome segregation during mitosis. Might link the lamina network to chromatin or nuclear actin, or both during interphase. This Caenorhabditis elegans protein is Titin homolog.